Here is a 135-residue protein sequence, read N- to C-terminus: Interleukin-5 (135 aa).

The N-terminal stretch at methionine 1–alanine 19 is a signal peptide. 3 N-linked (GlcNAc...) asparagine glycosylation sites follow: asparagine 48, asparagine 77, and asparagine 91.

Belongs to the IL-5 family. As to quaternary structure, homodimer; disulfide-linked. Interacts with IL5RA. Interacts with CSF2RB.

The protein resides in the secreted. Homodimeric cytokine expressed predominantly by T-lymphocytes and NK cells that plays an important role in the survival, differentiation, and chemotaxis of eosinophils. Also acts on activated and resting B-cells to induce immunoglobulin production, growth, and differentiation. Mechanistically, exerts its biological effects through a receptor composed of IL5RA subunit and the cytokine receptor common subunit beta/CSF2RB. Binding to the receptor leads to activation of various kinases including LYN, SYK and JAK2 and thereby propagates signals through the RAS-MAPK and JAK-STAT5 pathways respectively. In Cavia porcellus (Guinea pig), this protein is Interleukin-5 (IL5).